We begin with the raw amino-acid sequence, 284 residues long: Tryptophan 2,3-dioxygenase (284 aa).

Residues 51-55, tyrosine 113, and arginine 117 each bind substrate; that span reads FIIQH. Histidine 240 contributes to the heme binding site. A substrate-binding site is contributed by threonine 254.

It belongs to the tryptophan 2,3-dioxygenase family. In terms of assembly, homotetramer. Heme serves as cofactor.

The catalysed reaction is L-tryptophan + O2 = N-formyl-L-kynurenine. Its pathway is amino-acid degradation; L-tryptophan degradation via kynurenine pathway; L-kynurenine from L-tryptophan: step 1/2. In terms of biological role, heme-dependent dioxygenase that catalyzes the oxidative cleavage of the L-tryptophan (L-Trp) pyrrole ring and converts L-tryptophan to N-formyl-L-kynurenine. Catalyzes the oxidative cleavage of the indole moiety. The sequence is that of Tryptophan 2,3-dioxygenase from Arthrobacter sp. (strain FB24).